The primary structure comprises 167 residues: cAMP-dependent protein kinase type I-alpha regulatory subunit (167 aa).

Threonine 12 carries the post-translational modification Phosphothreonine. 2 positions are modified to phosphoserine: serine 14 and serine 20. The Pseudophosphorylation motif motif lies at 30 to 33 (RGAI). Position 34 is a phosphoserine (serine 34). 3',5'-cyclic AMP contacts are provided by residues 51-78 (LFSH…SKVS), 79-167 (ILES…ILKR), glutamate 147, and arginine 156. Serine 82 carries the post-translational modification Phosphoserine.

It belongs to the cAMP-dependent kinase regulatory chain family. In terms of assembly, the inactive holoenzyme is composed of two regulatory chains and two catalytic chains. Activation by cAMP releases the two active catalytic monomers and the regulatory dimer. Interacts with PRKACA and PRKACB. PRKAR1A also interacts with RFC2; the complex may be involved in cell survival. Interacts with AKAP4. Interacts with RARA; the interaction occurs in the presence of cAMP or FSH and regulates RARA transcriptional activity. Interacts with the phosphorylated form of PJA2. Interacts with CBFA2T3. Interacts with PRKX; regulates this cAMP-dependent protein kinase. Interacts with smAKAP; this interaction may target PRKAR1A to the plasma membrane. Interacts with AICDA. Post-translationally, the pseudophosphorylation site binds to the substrate-binding region of the catalytic chain, resulting in the inhibition of its activity.

It is found in the cell membrane. In terms of biological role, regulatory subunit of the cAMP-dependent protein kinases involved in cAMP signaling in cells. This Mesocricetus auratus (Golden hamster) protein is cAMP-dependent protein kinase type I-alpha regulatory subunit.